A 425-amino-acid chain; its full sequence is Dihydroorotase (425 aa).

Residues H56 and H58 each contribute to the Zn(2+) site. Substrate is bound by residues 58–60 (HWR) and N90. Zn(2+) contacts are provided by D147, H174, and H227. Residue N273 coordinates substrate. D300 contacts Zn(2+). The active site involves D300. Substrate contacts are provided by residues H304 and 318–319 (FG).

This sequence belongs to the metallo-dependent hydrolases superfamily. DHOase family. Class I DHOase subfamily. The cofactor is Zn(2+).

It catalyses the reaction (S)-dihydroorotate + H2O = N-carbamoyl-L-aspartate + H(+). Its pathway is pyrimidine metabolism; UMP biosynthesis via de novo pathway; (S)-dihydroorotate from bicarbonate: step 3/3. Functionally, catalyzes the reversible cyclization of carbamoyl aspartate to dihydroorotate. The protein is Dihydroorotase of Fusobacterium nucleatum subsp. nucleatum (strain ATCC 25586 / DSM 15643 / BCRC 10681 / CIP 101130 / JCM 8532 / KCTC 2640 / LMG 13131 / VPI 4355).